Consider the following 278-residue polypeptide: MSIIEAIIIGIVQGITEFLPISSTAHIVITQFLFDYTFPGFGFEIFLHIASILAVILYFRKDLLQVIVGFFSYFKDKSEENRIQFMFAIYIIVATGITGVLGLLLEDLVGAQMKTPPFIAGALIITGTFLIIIERFFVYKDRTVKDMTLKDSIIVGLGQTLAVFPGISRSGATLITALFSGLNKETAVRYSFLLSIPVILGTSVLAIGDLLDGTLVEQVGGLPLIISFIVTFFFSWLGIIWLIDFLKRSKLIYFAFYCFALAIFVFFYFDHNMTIDLE.

The next 7 membrane-spanning stretches (helical) occupy residues 1-21 (MSII…FLPI), 38-58 (FPGF…VILY), 85-105 (FMFA…GLLL), 118-138 (FIAG…RFFV), 191-211 (SFLL…GDLL), 223-243 (PLII…IWLI), and 251-271 (LIYF…YFDH).

This sequence belongs to the UppP family.

The protein resides in the cell membrane. It catalyses the reaction di-trans,octa-cis-undecaprenyl diphosphate + H2O = di-trans,octa-cis-undecaprenyl phosphate + phosphate + H(+). Catalyzes the dephosphorylation of undecaprenyl diphosphate (UPP). Confers resistance to bacitracin. The protein is Undecaprenyl-diphosphatase 2 of Halalkalibacterium halodurans (strain ATCC BAA-125 / DSM 18197 / FERM 7344 / JCM 9153 / C-125) (Bacillus halodurans).